The primary structure comprises 373 residues: Dual-specificity RNA methyltransferase RlmN (373 aa).

Glu94 acts as the Proton acceptor in catalysis. The region spanning 100–339 (EDDRATLCVS…VIVRKTRGDD (240 aa)) is the Radical SAM core domain. A disulfide bridge connects residues Cys107 and Cys344. Positions 114, 118, and 121 each coordinate [4Fe-4S] cluster. S-adenosyl-L-methionine contacts are provided by residues 168 to 169 (GE), Ser200, 222 to 224 (SIH), and Asn301. The active-site S-methylcysteine intermediate is the Cys344.

It belongs to the radical SAM superfamily. RlmN family. It depends on [4Fe-4S] cluster as a cofactor.

Its subcellular location is the cytoplasm. It carries out the reaction adenosine(2503) in 23S rRNA + 2 reduced [2Fe-2S]-[ferredoxin] + 2 S-adenosyl-L-methionine = 2-methyladenosine(2503) in 23S rRNA + 5'-deoxyadenosine + L-methionine + 2 oxidized [2Fe-2S]-[ferredoxin] + S-adenosyl-L-homocysteine. It catalyses the reaction adenosine(37) in tRNA + 2 reduced [2Fe-2S]-[ferredoxin] + 2 S-adenosyl-L-methionine = 2-methyladenosine(37) in tRNA + 5'-deoxyadenosine + L-methionine + 2 oxidized [2Fe-2S]-[ferredoxin] + S-adenosyl-L-homocysteine. In terms of biological role, specifically methylates position 2 of adenine 2503 in 23S rRNA and position 2 of adenine 37 in tRNAs. m2A2503 modification seems to play a crucial role in the proofreading step occurring at the peptidyl transferase center and thus would serve to optimize ribosomal fidelity. In Shewanella baltica (strain OS223), this protein is Dual-specificity RNA methyltransferase RlmN.